Reading from the N-terminus, the 209-residue chain is NAD(P)H-quinone oxidoreductase subunit I (209 aa).

2 consecutive 4Fe-4S ferredoxin-type domains span residues 55 to 84 (GRIH…VDYE) and 95 to 124 (NSYS…MTEE). [4Fe-4S] cluster contacts are provided by Cys64, Cys67, Cys70, Cys74, Cys104, Cys107, Cys110, and Cys114.

It belongs to the complex I 23 kDa subunit family. NDH-1 is composed of at least 11 different subunits. The cofactor is [4Fe-4S] cluster.

It localises to the cell inner membrane. It carries out the reaction a plastoquinone + NADH + (n+1) H(+)(in) = a plastoquinol + NAD(+) + n H(+)(out). The enzyme catalyses a plastoquinone + NADPH + (n+1) H(+)(in) = a plastoquinol + NADP(+) + n H(+)(out). Functionally, NDH-1 shuttles electrons from an unknown electron donor, via FMN and iron-sulfur (Fe-S) centers, to quinones in the respiratory and/or the photosynthetic chain. The immediate electron acceptor for the enzyme in this species is believed to be plastoquinone. Couples the redox reaction to proton translocation, and thus conserves the redox energy in a proton gradient. The polypeptide is NAD(P)H-quinone oxidoreductase subunit I (Gloeobacter violaceus (strain ATCC 29082 / PCC 7421)).